The following is a 95-amino-acid chain: Large ribosomal subunit protein uL23 (95 aa).

The protein belongs to the universal ribosomal protein uL23 family. As to quaternary structure, part of the 50S ribosomal subunit. Contacts protein L29, and trigger factor when it is bound to the ribosome.

Its function is as follows. One of the early assembly proteins it binds 23S rRNA. One of the proteins that surrounds the polypeptide exit tunnel on the outside of the ribosome. Forms the main docking site for trigger factor binding to the ribosome. In Geobacillus thermodenitrificans (strain NG80-2), this protein is Large ribosomal subunit protein uL23.